We begin with the raw amino-acid sequence, 494 residues long: Hexokinase-2 (494 aa).

The 452-residue stretch at 32 to 483 (GRADAVLREL…SGIGAALLAA (452 aa)) folds into the Hexokinase domain. The segment at 87 to 225 (SGEEKGVFYA…GLDMKVTALI (139 aa)) is hexokinase small subdomain. Residues Gly-101, Thr-102, and Asn-103 each coordinate ADP. Positions 191, 192, 226, and 227 each coordinate D-glucose. The interval 226–472 (NDTIGTLAGG…STIVIKLAKD (247 aa)) is hexokinase large subdomain. Residue Thr-250 participates in ADP binding. D-glucose contacts are provided by Asn-253, Glu-281, and Glu-312. An ADP-binding site is contributed by Gly-437.

Belongs to the hexokinase family. In terms of tissue distribution, expressed in roots, leaves, flowers, immature seeds, endosperm and seed coat.

The catalysed reaction is a D-hexose + ATP = a D-hexose 6-phosphate + ADP + H(+). It catalyses the reaction D-fructose + ATP = D-fructose 6-phosphate + ADP + H(+). The enzyme catalyses D-glucose + ATP = D-glucose 6-phosphate + ADP + H(+). It functions in the pathway carbohydrate metabolism; hexose metabolism. The protein operates within carbohydrate degradation; glycolysis; D-glyceraldehyde 3-phosphate and glycerone phosphate from D-glucose: step 1/4. Functionally, fructose and glucose phosphorylating enzyme. The polypeptide is Hexokinase-2 (HXK2) (Oryza sativa subsp. japonica (Rice)).